Here is a 575-residue protein sequence, read N- to C-terminus: MYHPGRSPSFLITLANVICAAILFDIHTGGYQPGSLIPIVAWMTPFVTLLWLSASFATYLYKYVRTRLLPEEKVARVYYTAQSAPYFDPALGVMMQFAPSHGGASIEVQVNPSWISLLGGSLKINGDDASNESAVLGSFYSSVKPGDEPASLVAIKSGPQTIGFGCRTKIDGDDCLFTANHVWNNSMRPTALAKRGKQVAIEDWETPLSCDHKMLDFVVVRVPKHVWSKLGVKATQLVCPSDKDAVTCYGGSSSDNLLSGTGVCSKVDFSWKLTHSCPTAAGWSGTPIYSSRGVVGMHVGFEDIGKLNRGVNAFYVSNYLLRSQETLPPELSVIEIPFEDVETRSYEFIEVEIKGRGKAKLGKREFAWIPESGKYWADDDDDSLPPPPKVVDGKMVWSSAQETVAEPLNYQRAAGSRPLPPFLNLQATTSKKEKQPLQEECPLDLLGSRLASLESCVEKILQMKSLELLGSSQNCQTSPGPSEAPKQSFTPCYSKQESLIPLESQGILKELVKTSLSATPPPNPVTVSVEKPGPSTQSTKKSARRRNRRKSTRKPVQESPSPASPQPTKTSLRGI.

3 helical membrane passes run 10-30 (FLIT…HTGG), 36-56 (LIPI…SASF), and 74-96 (VARV…VMMQ). In terms of domain architecture, Peptidase S39 spans 135-335 (VLGSFYSSVK…TLPPELSVIE (201 aa)). Residues His181, Asp216, and Ser284 each act as for protease activity in the active site. The tract at residues 513 to 575 (KTSLSATPPP…QPTKTSLRGI (63 aa)) is disordered. A compositionally biased stretch (basic residues) spans 541 to 553 (KSARRRNRRKSTR). The segment covering 558 to 575 (ESPSPASPQPTKTSLRGI) has biased composition (polar residues).

In terms of processing, the polyprotein is proteolytically cleaved into several chains by the viral protease.

Its subcellular location is the host membrane. In terms of biological role, responsible for cleavages of polyprotein P2A and replicase polyprotein P2AB. Covalently attached to the 5' extremity of the genomic and subgenomic RNAs. It may serve as a primer for the replicase. This Southern bean mosaic virus (isolate Bean/United States/Arkansas) (SBMV) protein is Polyprotein P2A.